An 827-amino-acid polypeptide reads, in one-letter code: Protein arginine N-methyltransferase 9 (827 aa).

TPR repeat units lie at residues 54–87 and 88–121; these read QYSL…FPID and DVIC…NPSS. SAM-dependent MTase PRMT-type domains are found at residues 124–453 and 511–827; these read AKEN…YLRL and NAVY…RPLQ.

Belongs to the class I-like SAM-binding methyltransferase superfamily. Protein arginine N-methyltransferase family.

The protein resides in the cytoplasm. The enzyme catalyses L-arginyl-[protein] + 2 S-adenosyl-L-methionine = N(omega),N(omega)'-dimethyl-L-arginyl-[protein] + 2 S-adenosyl-L-homocysteine + 2 H(+). Arginine methyltransferase that can both catalyze the formation of omega-N monomethylarginine (MMA) and symmetrical dimethylarginine (sDMA). The polypeptide is Protein arginine N-methyltransferase 9 (prmt9) (Xenopus laevis (African clawed frog)).